The primary structure comprises 483 residues: Betaine aldehyde dehydrogenase (483 aa).

Positions 27 and 93 each coordinate K(+). Residue 149 to 151 participates in NAD(+) binding; it reads GAW. The active-site Charge relay system is the lysine 161. Position 175–178 (175–178) interacts with NAD(+); that stretch reads KPSE. Valine 179 provides a ligand contact to K(+). 228-231 lines the NAD(+) pocket; it reads SVPT. Valine 243 lines the K(+) pocket. Catalysis depends on glutamate 249, which acts as the Proton acceptor. Positions 251, 283, and 380 each coordinate NAD(+). Cysteine 283 serves as the catalytic Nucleophile. Cysteine 283 is subject to Cysteine sulfenic acid (-SOH). The K(+) site is built by lysine 450 and glycine 453. Residue glutamate 457 is the Charge relay system of the active site.

This sequence belongs to the aldehyde dehydrogenase family. In terms of assembly, dimer of dimers. K(+) is required as a cofactor.

It carries out the reaction betaine aldehyde + NAD(+) + H2O = glycine betaine + NADH + 2 H(+). The protein operates within amine and polyamine biosynthesis; betaine biosynthesis via choline pathway; betaine from betaine aldehyde: step 1/1. In terms of biological role, involved in the biosynthesis of the osmoprotectant glycine betaine. Catalyzes the irreversible oxidation of betaine aldehyde to the corresponding acid. The sequence is that of Betaine aldehyde dehydrogenase from Cereibacter sphaeroides (strain ATCC 17025 / ATH 2.4.3) (Rhodobacter sphaeroides).